The sequence spans 329 residues: ATPase ASNA1 homolog 1 (329 aa).

26-33 (KGGVGKTT) is an ATP binding site. The active site involves aspartate 55. Residues glutamate 235 and asparagine 262 each contribute to the ATP site. Zn(2+) is bound by residues cysteine 271 and cysteine 274.

It belongs to the arsA ATPase family. Homodimer.

The protein localises to the cytoplasm. Its subcellular location is the endoplasmic reticulum. Its function is as follows. ATPase required for the post-translational delivery of tail-anchored (TA) proteins to the endoplasmic reticulum. Recognizes and selectively binds the transmembrane domain of TA proteins in the cytosol. This complex then targets to the endoplasmic reticulum by membrane-bound receptors, where the tail-anchored protein is released for insertion. This process is regulated by ATP binding and hydrolysis. ATP binding drives the homodimer towards the closed dimer state, facilitating recognition of newly synthesized TA membrane proteins. ATP hydrolysis is required for insertion. Subsequently, the homodimer reverts towards the open dimer state, lowering its affinity for the membrane-bound receptor, and returning it to the cytosol to initiate a new round of targeting. This is ATPase ASNA1 homolog 1 from Paramecium tetraurelia.